The sequence spans 416 residues: 1-deoxy-D-xylulose 5-phosphate reductoisomerase (416 aa).

8 residues coordinate NADPH: T10, G11, S12, I13, G36, R37, N38, and N130. K131 contributes to the 1-deoxy-D-xylulose 5-phosphate binding site. Residue E132 coordinates NADPH. A Mn(2+)-binding site is contributed by D156. Positions 157, 158, 194, and 217 each coordinate 1-deoxy-D-xylulose 5-phosphate. Residue E158 coordinates Mn(2+). G223 contacts NADPH. 1-deoxy-D-xylulose 5-phosphate-binding residues include S230, N235, K236, and E239. A Mn(2+)-binding site is contributed by E239.

It belongs to the DXR family. It depends on Mg(2+) as a cofactor. The cofactor is Mn(2+).

The enzyme catalyses 2-C-methyl-D-erythritol 4-phosphate + NADP(+) = 1-deoxy-D-xylulose 5-phosphate + NADPH + H(+). Its pathway is isoprenoid biosynthesis; isopentenyl diphosphate biosynthesis via DXP pathway; isopentenyl diphosphate from 1-deoxy-D-xylulose 5-phosphate: step 1/6. Functionally, catalyzes the NADPH-dependent rearrangement and reduction of 1-deoxy-D-xylulose-5-phosphate (DXP) to 2-C-methyl-D-erythritol 4-phosphate (MEP). The chain is 1-deoxy-D-xylulose 5-phosphate reductoisomerase from Synechococcus sp. (strain CC9311).